The primary structure comprises 194 residues: Chitin synthase 2 (194 aa).

The protein belongs to the chitin synthase family. Class III subfamily.

It localises to the cell membrane. The catalysed reaction is [(1-&gt;4)-N-acetyl-beta-D-glucosaminyl](n) + UDP-N-acetyl-alpha-D-glucosamine = [(1-&gt;4)-N-acetyl-beta-D-glucosaminyl](n+1) + UDP + H(+). In terms of biological role, polymerizes chitin, a structural polymer of the cell wall and septum, by transferring the sugar moiety of UDP-GlcNAc to the non-reducing end of the growing chitin polymer. In Ajellomyces capsulatus (Darling's disease fungus), this protein is Chitin synthase 2 (CHS2).